Consider the following 1133-residue polypeptide: RNA-dependent RNA polymerase 2 (1133 aa).

Mg(2+)-binding residues include D830, D832, and D834.

This sequence belongs to the RdRP family. As to quaternary structure, interacts with NRPD1 and SHH1. Associates with Pol IV complex, forming an interpolymerase channel bridging their active sites, through which the Pol IV-generated transcript is handed over to the RDR2 active site after being backtracked, where it is used as the template for double-stranded RNA (dsRNA) synthesis. Interacts with JMJ24.

The protein resides in the nucleus. It localises to the nucleoplasm. Its subcellular location is the nucleolus. It carries out the reaction RNA(n) + a ribonucleoside 5'-triphosphate = RNA(n+1) + diphosphate. In terms of biological role, RNA-dependent direct polymerase involved in the production of small interfering RNAs (siRNAs). Binds to single-stranded RNA (ssRNA); engages ssRNAs longer than 7 nucleotides and initiates internal to their 3' ends. Able to transcribe the RNA of an RNA/DNA hybrid, the transcript produced by Pol IV, if its 3' end is accessible, to generate double-stranded small interfering RNAs (dsRNAs) precursor essential for establishing and maintaining DNA methylation. Required for the biogenesis of endogenous siRNAs of 24 nucleotide which derive from heterochromatin and DNA repeats such as transposons or endogenous gene tandem repeats, such as repeats present in FWA gene. Involved in transcriptional gene silencing (TGS). Component of the RNA-directed DNA methylation (RdDM) silencing pathway that utilizes siRNAs to guide DNA methyltransferases to asymmetric cytosines. Involved in control of flowering time through RdDM of FWA locus. Required for reception of long-distance mRNA silencing in the shoot. Required for the formation of telomeric siRNAs and the RNA-dependent DNA methylation of asymmetric cytosines in telomeric (5'-CCCTAAA-3') repeats. The sequence is that of RNA-dependent RNA polymerase 2 from Arabidopsis thaliana (Mouse-ear cress).